Here is a 341-residue protein sequence, read N- to C-terminus: GTP 3',8-cyclase (341 aa).

Positions Thr-17–Glu-235 constitute a Radical SAM core domain. Position 26 (Arg-26) interacts with GTP. Residues Cys-33 and Cys-37 each coordinate [4Fe-4S] cluster. Residue Tyr-39 coordinates S-adenosyl-L-methionine. [4Fe-4S] cluster is bound at residue Cys-40. Arg-77 is a GTP binding site. Gly-81 provides a ligand contact to S-adenosyl-L-methionine. Thr-108 serves as a coordination point for GTP. Residue Ser-132 participates in S-adenosyl-L-methionine binding. Position 169 (Lys-169) interacts with GTP. Met-203 serves as a coordination point for S-adenosyl-L-methionine. Cys-268 and Cys-271 together coordinate [4Fe-4S] cluster. Arg-273–Arg-275 is a binding site for GTP. A [4Fe-4S] cluster-binding site is contributed by Cys-285.

Belongs to the radical SAM superfamily. MoaA family. In terms of assembly, monomer and homodimer. It depends on [4Fe-4S] cluster as a cofactor.

The catalysed reaction is GTP + AH2 + S-adenosyl-L-methionine = (8S)-3',8-cyclo-7,8-dihydroguanosine 5'-triphosphate + 5'-deoxyadenosine + L-methionine + A + H(+). Its pathway is cofactor biosynthesis; molybdopterin biosynthesis. In terms of biological role, catalyzes the cyclization of GTP to (8S)-3',8-cyclo-7,8-dihydroguanosine 5'-triphosphate. This is GTP 3',8-cyclase from Streptomyces coelicolor (strain ATCC BAA-471 / A3(2) / M145).